Consider the following 1040-residue polypeptide: Contactin-2 (1040 aa).

The signal sequence occupies residues 1–30 (MGTATRRKPHLLLVAAVALVSSSAWSSALG). Ig-like C2-type domains are found at residues 43-128 (PLSV…AILR), 133-222 (QEFS…SVFS), 239-322 (PSIK…GRII), 327-411 (PEWL…AELA), 417-504 (PDFR…GILS), and 509-603 (TKIT…ATVL). Disulfide bonds link C61–C111, C155–C207, C261–C306, and C348–C395. N-linked (GlcNAc...) asparagine glycosylation is found at N76, N198, and N204. N-linked (GlcNAc...) asparagine glycans are attached at residues N461, N477, N498, and N525. Fibronectin type-III domains are found at residues 610–708 (PPGG…TREA), 713–810 (APSG…SAEE), 815–910 (APTK…TMKP), and 915–1006 (PPGN…NGGT). The disordered stretch occupies residues 694–720 (GEPSGPSSKIRTREAAPSVAPSGLSGG). A Cell attachment site motif is present at residues 794 to 796 (RGD). N-linked (GlcNAc...) asparagine glycans are attached at residues N830, N904, N918, and N940. The interval 894–919 (AGTGPASPSANATTMKPPPRRPPGNI) is disordered. N1012 carries GPI-anchor amidated asparagine lipidation. Positions 1013–1040 (MAVRPAPHPGTVISHSVAMLILIGSLEL) are cleaved as a propeptide — removed in mature form.

This sequence belongs to the immunoglobulin superfamily. Contactin family.

Its subcellular location is the cell membrane. Its function is as follows. In conjunction with another transmembrane protein, CNTNAP2, contributes to the organization of axonal domains at nodes of Ranvier by maintaining voltage-gated potassium channels at the juxtaparanodal region. May be involved in cell adhesion. The protein is Contactin-2 (CNTN2) of Homo sapiens (Human).